The following is a 414-amino-acid chain: Esterase FrsA (414 aa).

The protein belongs to the FrsA family.

The enzyme catalyses a carboxylic ester + H2O = an alcohol + a carboxylate + H(+). Functionally, catalyzes the hydrolysis of esters. The sequence is that of Esterase FrsA from Citrobacter koseri (strain ATCC BAA-895 / CDC 4225-83 / SGSC4696).